A 105-amino-acid chain; its full sequence is Intermembrane phospholipid transport system binding protein MlaB (105 aa).

An STAS domain is found at tryptophan 4 to isoleucine 105.

As to quaternary structure, the complex is composed of two ATP-binding proteins (MlaF), two transmembrane proteins (MlaE), two cytoplasmic solute-binding proteins (MlaB) and six periplasmic solute-binding proteins (MlaD).

The protein localises to the cytoplasm. Its function is as follows. Part of the ABC transporter complex MlaFEDB, which is involved in a phospholipid transport pathway that maintains lipid asymmetry in the outer membrane by retrograde trafficking of phospholipids from the outer membrane to the inner membrane. MlaB plays critical roles in both the assembly and activity of the complex. May act by modulating MlaF structure and stability. The chain is Intermembrane phospholipid transport system binding protein MlaB from Haemophilus influenzae (strain ATCC 51907 / DSM 11121 / KW20 / Rd).